The sequence spans 500 residues: Lysine--tRNA ligase (500 aa).

Residues E410 and E417 each coordinate Mg(2+).

This sequence belongs to the class-II aminoacyl-tRNA synthetase family. In terms of assembly, homodimer. The cofactor is Mg(2+).

Its subcellular location is the cytoplasm. It carries out the reaction tRNA(Lys) + L-lysine + ATP = L-lysyl-tRNA(Lys) + AMP + diphosphate. In Shewanella oneidensis (strain ATCC 700550 / JCM 31522 / CIP 106686 / LMG 19005 / NCIMB 14063 / MR-1), this protein is Lysine--tRNA ligase.